The chain runs to 681 residues: MSKTFLRPKVSSTKVTDWVDPSFDDFLECSGVSTITATSLGVNNSSHRRKNGPSTLESSRFPARKRGNLSSLEQIYGLENSKEYLSENEPWVDKYKPETQHELAVHKKKIEEVETWLKAQVLERQPKQGGSILLITGPPGCGKTTTLKILSKEHGIQVQEWINPVLPDFQKDDFKGMFNTESSFHMFPYQSQIAVFKEFLLRATKYNKLQMLGDDLRTDKKIILVEDLPNQFYRDSHTLHEVLRKYVRIGRCPLIFIISDSLSGDNNQRLLFPKEIQEECSISNISFNPVAPTIMMKFLNRIVTIEANKNGGKITVPDKTSLELLCQGCSGDIRSAINSLQFSSSKGENNLRPRKKGMSLKSDAVLSKSKRRKKPDRVFENQEVQAIGGKDVSLFLFRALGKILYCKRASLTELDSPRLPSHLSEYERDTLLVEPEEVVEMSHMPGDLFNLYLHQNYIDFFMEIDDIVRASEFLSFADILSGDWNTRSLLREYSTSIATRGVMHSNKARGYAHCQGGGSSFRPLHKPQWFLINKKYRENCLAAKALFPDFCLPALCLQTQLLPYLALLTIPMRNQAQISFIQDIGRLPLKRHFGRLKMEALTDREHGMIDPDSGDEAQLNGGHSAEESLGEPTQATVPETWSLPLSQNSASELPASQPQPFSAQGDMEENIIIEDYESDGT.

The RAD1-binding motif signature appears at 17-25 (DWVDPSFDD). The segment at 42-61 (VNNSSHRRKNGPSTLESSRF) is disordered. Position 55 is a phosphothreonine (T55). Residues S71 and S86 each carry the phosphoserine modification. 137 to 144 (GPPGCGKT) serves as a coordination point for ATP. Disordered regions lie at residues 344–377 (SSKG…KPDR) and 606–681 (HGMI…SDGT). Position 359 is a phosphoserine (S359). Residues 432–681 (LVEPEEVVEM…IIEDYESDGT (250 aa)) form an interaction with MCM7 region. Residues 631–662 (EPTQATVPETWSLPLSQNSASELPASQPQPFS) show a composition bias toward polar residues. T633 carries the post-translational modification Phosphothreonine; by ATM. Phosphoserine; by ATR and ATM is present on residues S646 and S656. Positions 666–681 (DMEENIIIEDYESDGT) are enriched in acidic residues.

The protein belongs to the rad17/RAD24 family. Part of a DNA-binding complex containing RFC2, RFC3, RFC4 and RFC5. Interacts with RAD1 and RAD9 within the 9-1-1 (RAD1-RAD9-HUS1) complex. Interacts with RAD9B, POLE, SNU13 and MCM7. DNA damage promotes interaction with ATR or ATM and disrupts interaction with the 9-1-1 (RAD1-RAD9-HUS1) complex. Interacts (when phosphorylated) with NBN; promoting recruitment of the MRN complex to DNA damage sites. In terms of processing, phosphorylation on Ser-646 and Ser-656 is cell cycle-regulated, enhanced by genotoxic stress, and required for activation of checkpoint signaling. Phosphorylation is mediated by ATR upon UV or replication arrest, whereas it may be mediated both by ATR and ATM upon ionizing radiation. Phosphorylation on both sites is required for interaction with RAD1 but dispensable for interaction with RFC3 or RFC4. Phosphorylation at Thr-633 by ATM in response to DNA damage promotes interaction with NBN and recruitment of the MRN complex to DNA damage sites. As to expression, overexpressed in various cancer cell lines and in colon carcinoma (at protein level). Isoform 2 and isoform 3 are the most abundant isoforms in non irradiated cells (at protein level). Ubiquitous at low levels. Highly expressed in testis, where it is expressed within the germinal epithelium of the seminiferous tubuli. Weakly expressed in seminomas (testicular tumors).

Its subcellular location is the nucleus. The protein resides in the chromosome. Its function is as follows. Essential for sustained cell growth, maintenance of chromosomal stability, and ATR-dependent checkpoint activation upon DNA damage. Has a weak ATPase activity required for binding to chromatin. Participates in the recruitment of the 9-1-1 (RAD1-RAD9-HUS1) complex and RHNO1 onto chromatin, and in CHEK1 activation. Involved in homologous recombination by mediating recruitment of the MRN complex to DNA damage sites. May also serve as a sensor of DNA replication progression. This chain is Cell cycle checkpoint protein RAD17, found in Homo sapiens (Human).